Here is a 497-residue protein sequence, read N- to C-terminus: Cobyric acid synthase (497 aa).

Residues 251-443 (DLKIGVVWYP…LHGLFDNDFF (193 aa)) enclose the GATase cobBQ-type domain. Catalysis depends on Cys333, which acts as the Nucleophile. Residue His435 is part of the active site.

The protein belongs to the CobB/CobQ family. CobQ subfamily.

The protein operates within cofactor biosynthesis; adenosylcobalamin biosynthesis. In terms of biological role, catalyzes amidations at positions B, D, E, and G on adenosylcobyrinic A,C-diamide. NH(2) groups are provided by glutamine, and one molecule of ATP is hydrogenolyzed for each amidation. The protein is Cobyric acid synthase of Carboxydothermus hydrogenoformans (strain ATCC BAA-161 / DSM 6008 / Z-2901).